The sequence spans 103 residues: Alpha-ketoglutarate dehydrogenase component 4 (103 aa).

At M1 the chain carries N-acetylmethionine. K5 carries the N6-succinyllysine modification. The disordered stretch occupies residues 20-69 (TPLIRFPDRRDNPKPNVSEALRSAGLPSHSSVISQHSKGSKSPDLLMYQG). A compositionally biased stretch (polar residues) spans 47-56 (SHSSVISQHS). S49, S61, and S90 each carry phosphoserine.

This sequence belongs to the alpha-ketoglutarate dehydrogenase component 4 family. In terms of assembly, component of the 2-oxoglutarate dehydrogenase complex (OGDHC), composed of OGDH (2-oxoglutarate dehydrogenase; also called E1 subunit), DLST (dihydrolipoamide succinyltransferase; also called E2 subunit) and DLD (dihydrolipoamide dehydrogenase; also called E3 subunit), and the assembly factor KGD4. Within OGDHC complex, interacts (via N-terminus) with E3 subunit and (via C-terminus) with E2 subunit.

Its subcellular location is the mitochondrion. In terms of biological role, molecular adapter that is necessary to form a stable 2-oxoglutarate dehydrogenase enzyme complex (OGDHC). Enables the specific recruitment of E3 subunit to E2 subunit in the 2-oxoglutarate dehydrogenase complex (OGDHC). The protein is Alpha-ketoglutarate dehydrogenase component 4 of Homo sapiens (Human).